The primary structure comprises 276 residues: Rhomboid protease GlpG (276 aa).

6 consecutive transmembrane segments (helical) span residues 94 to 114 (GPVT…MSLI), 142 to 162 (IFMH…WYLG), 169 to 189 (LGSG…GYVQ), 192 to 212 (FSGP…GYVW), 229 to 249 (LIIF…GMSM), and 250 to 270 (ANGA…VDTL). Residue Ser201 is the Nucleophile of the active site. Residue His254 is part of the active site.

This sequence belongs to the peptidase S54 family.

Its subcellular location is the cell inner membrane. The enzyme catalyses Cleaves type-1 transmembrane domains using a catalytic dyad composed of serine and histidine that are contributed by different transmembrane domains.. In terms of biological role, rhomboid-type serine protease that catalyzes intramembrane proteolysis. This Salmonella choleraesuis (strain SC-B67) protein is Rhomboid protease GlpG.